The sequence spans 565 residues: MEPKTKKQRSLYIPYAGPVLLEFPLLNKGSAFSMEERRNFNLLGLLPEVVETIEEQAERAWIQYQGFKTEIDKHIYLRNIQDTNETLFYRLVNNHLDEMMPVIYTPTVGAACERFSEIYRRSRGVFISYQNRHNMDDILQNVPNHNIKVIVVTDGERILGLGDQGIGGMGIPIGKLSLYTACGGISPAYTLPVVLDVGTNNQQLLNDPLYMGWRNPRITDDEYYEFVDEFIQAVKQRWPDVLLQFEDFAQKNAMPLLNRYRNEICSFNDDIQGTAAVTVGTLIAASRAAGGQLSEKKIVFLGAGSAGCGIAEMIIAQTQREGLSEEAARQKVFMVDRFGLLTDKMPNLLPFQTKLVQKRENLSDWDTDSDVLSLLDVVRNVKPDILIGVSGQTGLFTEEIIREMHKHCPRPIVMPLSNPTSRVEATPQDIIAWTEGNALVATGSPFNPVVWKDKIYPIAQCNNAFIFPGIGLGVIASGASRITDEMLMSASETLAQYSPLVLNGEGLVLPELKDIQKVSRAIAFAVGKMAQQQGVAVKTSAEALQQAIDDNFWHAEYRDYRRTSI.

Tyrosine 104 serves as the catalytic Proton donor. Arginine 157 is an NAD(+) binding site. Residue lysine 175 is the Proton acceptor of the active site. A divalent metal cation-binding residues include glutamate 246, aspartate 247, and aspartate 270. Positions 270 and 418 each coordinate NAD(+).

Belongs to the malic enzymes family. As to quaternary structure, homotetramer. Mg(2+) serves as cofactor. It depends on Mn(2+) as a cofactor.

It catalyses the reaction (S)-malate + NAD(+) = pyruvate + CO2 + NADH. It carries out the reaction oxaloacetate + H(+) = pyruvate + CO2. The polypeptide is NAD-dependent malic enzyme (Escherichia coli O127:H6 (strain E2348/69 / EPEC)).